The following is a 311-amino-acid chain: GTP cyclohydrolase FolE2 (311 aa).

This sequence belongs to the GTP cyclohydrolase IV family.

The enzyme catalyses GTP + H2O = 7,8-dihydroneopterin 3'-triphosphate + formate + H(+). Its pathway is cofactor biosynthesis; 7,8-dihydroneopterin triphosphate biosynthesis; 7,8-dihydroneopterin triphosphate from GTP: step 1/1. Converts GTP to 7,8-dihydroneopterin triphosphate. The chain is GTP cyclohydrolase FolE2 from Xanthomonas campestris pv. campestris (strain B100).